The primary structure comprises 347 residues: UDP-3-O-acylglucosamine N-acyltransferase (347 aa).

Histidine 248 (proton acceptor) is an active-site residue.

Belongs to the transferase hexapeptide repeat family. LpxD subfamily. Homotrimer.

It carries out the reaction a UDP-3-O-[(3R)-3-hydroxyacyl]-alpha-D-glucosamine + a (3R)-hydroxyacyl-[ACP] = a UDP-2-N,3-O-bis[(3R)-3-hydroxyacyl]-alpha-D-glucosamine + holo-[ACP] + H(+). Its pathway is bacterial outer membrane biogenesis; LPS lipid A biosynthesis. In terms of biological role, catalyzes the N-acylation of UDP-3-O-acylglucosamine using 3-hydroxyacyl-ACP as the acyl donor. Is involved in the biosynthesis of lipid A, a phosphorylated glycolipid that anchors the lipopolysaccharide to the outer membrane of the cell. The polypeptide is UDP-3-O-acylglucosamine N-acyltransferase (Synechococcus sp. (strain CC9902)).